Reading from the N-terminus, the 332-residue chain is uncharacterized protein (332 aa).

The disordered stretch occupies residues 306–332 (EKNTSEVTEPKTGPSGTKDNYHLHSIF).

This is an uncharacterized protein from Homo sapiens (Human).